Reading from the N-terminus, the 138-residue chain is Small ribosomal subunit protein uS11 (138 aa).

Belongs to the universal ribosomal protein uS11 family. As to quaternary structure, part of the 30S ribosomal subunit.

Its function is as follows. Located on the platform of the 30S subunit. This is Small ribosomal subunit protein uS11 from Pyrobaculum arsenaticum (strain DSM 13514 / JCM 11321 / PZ6).